Here is a 797-residue protein sequence, read N- to C-terminus: MLENKNHKKISLSGKSLLMGTLSTAAIVLSASTANAATINADNVNENQTVEVTASSVNNENNKQVTEKDSADKSTSDVAEDANTKKSNENTETTEKNTQTVVTNAPVSDVKNTNTVTAETPVDKVVNNSDQKTTNAATTDTKKDDVKQVEKKDSVDKTNAEENKDSSVKPAENATKAELKGQVKDIVEESGVDTSKLTNDQINELNKINFSKEAKSGTQLTYNDFKKIAKTLIEQDARYAIPFFNASKIKNMPAAKTLDAQSGKVEDLEIWDSWPVQDAKTGYVSNWNGYQLVIGMMGVPNVNDNHIYLLYNKYGDNDFNHWKNAGPIFGLGTPVIQQWSGSATLNKDGSIQLYYTKVDTSDNNTNHQKLASATVYLNLEKDQDKISIAHVDNDHIVFEGDGYHYQTYDQWKETNKGADNIAMRDAHVIDDDNGNRYLVFEASTGTENYQGDDQIYQWLNYGGTNKDNLGDFFQILSNSDIKDRAKWSNAAIGIIKLNDDVKNPSVAKVYSPLISAPMVSDEIERPDVVKLGNKYYLFAATRLNRGSNDDAWMATNKAVGDNVAMIGYVSDNLTHGYVPLNESGVVLTASVPANWRTATYSYYAVPVEGRDDQLLITSYITNRGEVAGKGMHATWAPSFLLQINPDNTTTVLAKMTNQGDWIWDDSSENPDMMGVLEKDAPNSAALPGEWGKPVDWDLIGGYNLKPHQPVTPIPNVPTTPETPTTPDKPEVPTTPEVPTTPETPTPEAPKNPVKKTSQSKLPKAGDKNSFAAVVLGAVSSILGAVGLTGVSKRKRNN.

A signal peptide spans 1 to 36 (MLENKNHKKISLSGKSLLMGTLSTAAIVLSASTANA). Over residues 54-64 (ASSVNNENNKQ) the composition is skewed to polar residues. The segment at 54–176 (ASSVNNENNK…SVKPAENATK (123 aa)) is disordered. Basic and acidic residues-rich tracts occupy residues 65-75 (VTEKDSADKST) and 82-95 (ANTK…ETTE). Residues 130–139 (DQKTTNAATT) are compositionally biased toward low complexity. Basic and acidic residues predominate over residues 140 to 167 (DTKKDDVKQVEKKDSVDKTNAEENKDSS). Residue W271 participates in substrate binding. D272 acts as the Nucleophile in catalysis. Residue N317 coordinates Ca(2+). S340 provides a ligand contact to substrate. Residue D419 participates in Ca(2+) binding. A substrate-binding site is contributed by 424–425 (RD). Q450, W487, N489, and D521 together coordinate Ca(2+). Substrate-binding positions include 522 to 524 (EIE) and R542. The active-site Proton donor/acceptor is the E524. Residues D660, I662, and S667 each coordinate Ca(2+). Residues 708-766 (QPVTPIPNVPTTPETPTTPDKPEVPTTPEVPTTPETPTPEAPKNPVKKTSQSKLPKAGD) form a disordered region. Low complexity predominate over residues 718-740 (TTPETPTTPDKPEVPTTPEVPTT). The LPXTG sorting signal signature appears at 761–765 (LPKAG). Position 764 is a pentaglycyl murein peptidoglycan amidated alanine (A764). A propeptide spans 765–797 (GDKNSFAAVVLGAVSSILGAVGLTGVSKRKRNN) (removed by sortase).

It belongs to the glycosyl hydrolase 68 family. Ca(2+) serves as cofactor.

Its subcellular location is the secreted. It is found in the cell wall. It carries out the reaction [(2-&gt;1)-beta-D-fructosyl](n) + sucrose = [(2-&gt;1)-beta-D-fructosyl](n+1) + D-glucose. Fructosyltransferase that catalyzes the polymerization of the fructose moiety of sucrose to produce inulin polymer and inulin oligosaccharides such as 1-kestose and nystose. This Lactobacillus johnsonii (strain CNCM I-12250 / La1 / NCC 533) protein is Inulosucrase.